A 139-amino-acid chain; its full sequence is MRHGKVHRKLNRTAEHRKAMFANMAASLIKHEQIVTTLPKAKELRPIVEKLVTLGKKGGLALRRQAISELRDHDQVKKLFDALAARYKDRQGGYTRIIKAGFRYGDNAPMAVIEFVDRDVDAKGQDSGPVQEKADSEAA.

Belongs to the bacterial ribosomal protein bL17 family. Part of the 50S ribosomal subunit. Contacts protein L32.

The chain is Large ribosomal subunit protein bL17 from Afipia carboxidovorans (strain ATCC 49405 / DSM 1227 / KCTC 32145 / OM5) (Oligotropha carboxidovorans).